Reading from the N-terminus, the 476-residue chain is Ribulose bisphosphate carboxylase large chain (476 aa).

Asn124 and Thr174 together coordinate substrate. Lys176 serves as the catalytic Proton acceptor. Lys178 lines the substrate pocket. Lys202, Asp204, and Glu205 together coordinate Mg(2+). Lys202 carries the post-translational modification N6-carboxylysine. His295 acts as the Proton acceptor in catalysis. Residues Arg296, His328, and Ser380 each contribute to the substrate site.

It belongs to the RuBisCO large chain family. Type I subfamily. Heterohexadecamer of 8 large chains and 8 small chains; disulfide-linked. The disulfide link is formed within the large subunit homodimers. Requires Mg(2+) as cofactor. In terms of processing, the disulfide bond which can form in the large chain dimeric partners within the hexadecamer appears to be associated with oxidative stress and protein turnover.

Its subcellular location is the carboxysome. It carries out the reaction 2 (2R)-3-phosphoglycerate + 2 H(+) = D-ribulose 1,5-bisphosphate + CO2 + H2O. The enzyme catalyses D-ribulose 1,5-bisphosphate + O2 = 2-phosphoglycolate + (2R)-3-phosphoglycerate + 2 H(+). Functionally, ruBisCO catalyzes two reactions: the carboxylation of D-ribulose 1,5-bisphosphate, the primary event in carbon dioxide fixation, as well as the oxidative fragmentation of the pentose substrate in the photorespiration process. Both reactions occur simultaneously and in competition at the same active site. The chain is Ribulose bisphosphate carboxylase large chain from Acaryochloris marina (strain MBIC 11017).